Reading from the N-terminus, the 482-residue chain is Type II methyltransferase M.AvaI (482 aa).

This sequence belongs to the N(4)/N(6)-methyltransferase family. N(4) subfamily.

The enzyme catalyses a 2'-deoxycytidine in DNA + S-adenosyl-L-methionine = an N(4)-methyl-2'-deoxycytidine in DNA + S-adenosyl-L-homocysteine + H(+). Functionally, an alpha subtype methylase that recognizes the double-stranded sequence 5'-CYCGRG-3', methylates C-1 on both strands, and protects the DNA from cleavage by the AvaI endonuclease. The polypeptide is Type II methyltransferase M.AvaI (Anabaena variabilis).